A 194-amino-acid chain; its full sequence is Molybdenum cofactor guanylyltransferase (194 aa).

GTP-binding positions include 12–14 (LAG), Lys25, Asn53, Asp70, and Asp100. Asp100 lines the Mg(2+) pocket.

The protein belongs to the MobA family. In terms of assembly, monomer. The cofactor is Mg(2+).

Its subcellular location is the cytoplasm. The enzyme catalyses Mo-molybdopterin + GTP + H(+) = Mo-molybdopterin guanine dinucleotide + diphosphate. Transfers a GMP moiety from GTP to Mo-molybdopterin (Mo-MPT) cofactor (Moco or molybdenum cofactor) to form Mo-molybdopterin guanine dinucleotide (Mo-MGD) cofactor. This Photobacterium profundum (strain SS9) protein is Molybdenum cofactor guanylyltransferase.